Reading from the N-terminus, the 283-residue chain is Eukaryotic translation initiation factor 3 subunit K (283 aa).

The region spanning 52–263 is the PCI domain; the sequence is YDLLANLAIL…EIKATVIREE (212 aa). Positions 114–135 are disordered; the sequence is EATTTDADNAGSLSGDDDDDEV.

This sequence belongs to the eIF-3 subunit K family. As to quaternary structure, component of the eukaryotic translation initiation factor 3 (eIF-3) complex.

It localises to the cytoplasm. In terms of biological role, component of the eukaryotic translation initiation factor 3 (eIF-3) complex, which is involved in protein synthesis of a specialized repertoire of mRNAs and, together with other initiation factors, stimulates binding of mRNA and methionyl-tRNAi to the 40S ribosome. The eIF-3 complex specifically targets and initiates translation of a subset of mRNAs involved in cell proliferation. This chain is Eukaryotic translation initiation factor 3 subunit K, found in Mycosarcoma maydis (Corn smut fungus).